A 744-amino-acid polypeptide reads, in one-letter code: Serine/threonine-protein kinase GM11705 (744 aa).

Residues 17-35 (VLSSHQPSPSATHPQSVPS) are compositionally biased toward polar residues. 2 disordered regions span residues 17–38 (VLSS…SKAN) and 54–78 (NVQE…PEKE). Doublecortin domains follow at residues 154–240 (LRIK…VEYN) and 309–392 (RIVT…AEDF). A Protein kinase domain is found at 473 to 731 (YTLGRIIGDG…SEDILDHPWT (259 aa)). ATP contacts are provided by residues 479 to 487 (IGDGNFAIV) and K502. Catalysis depends on D594, which acts as the Proton acceptor.

The protein belongs to the protein kinase superfamily. CAMK Ser/Thr protein kinase family. CaMK subfamily.

It carries out the reaction L-seryl-[protein] + ATP = O-phospho-L-seryl-[protein] + ADP + H(+). The enzyme catalyses L-threonyl-[protein] + ATP = O-phospho-L-threonyl-[protein] + ADP + H(+). The sequence is that of Serine/threonine-protein kinase GM11705 from Drosophila sechellia (Fruit fly).